A 147-amino-acid chain; its full sequence is Phospholipase A2 inhibitor subunit A (147 aa).

In terms of domain architecture, C-type lectin spans 62-143; the sequence is EICRQAGGRI…DDNLLVVCEF (82 aa). 2 disulfide bridges follow: Cys-64–Cys-141 and Cys-119–Cys-133. An N-linked (GlcNAc...) asparagine glycan is attached at Asn-103.

It belongs to the alpha-type phospholipase A2 inhibitor family. As to quaternary structure, homotrimer; non-covalently linked. Post-translationally, glycosylated. In terms of tissue distribution, expressed by the liver.

The protein resides in the secreted. Its function is as follows. Inhibits the enzymatic activity of the acidic phospholipase A2 (PLA2). This chain is Phospholipase A2 inhibitor subunit A, found in Gloydius brevicaudus siniticus (Chinese mamushi).